The chain runs to 749 residues: Soluble starch synthase 2-1, chloroplastic/amyloplastic (749 aa).

A chloroplast-targeting transit peptide spans 1-44 (MAAAAVSSLLAPSGSCYSPGCHSCWGPGPGGGRRLPSPRRRPIT). ADP-alpha-D-glucose is bound at residue lysine 272.

The protein belongs to the glycosyltransferase 1 family. Bacterial/plant glycogen synthase subfamily. As to expression, expressed in endosperm, leaves, and weakly in roots.

It localises to the plastid. The protein localises to the amyloplast. It is found in the chloroplast. The enzyme catalyses [(1-&gt;4)-alpha-D-glucosyl](n) + ADP-alpha-D-glucose = [(1-&gt;4)-alpha-D-glucosyl](n+1) + ADP + H(+). It participates in glycan biosynthesis; starch biosynthesis. Its function is as follows. May be involved in starch synthesis in endosperm amyloplasts and contribute to the deposition of transient starch in chloroplasts of leaves. The sequence is that of Soluble starch synthase 2-1, chloroplastic/amyloplastic (SSII-1) from Oryza sativa subsp. japonica (Rice).